A 335-amino-acid chain; its full sequence is Beta-hexosaminidase (335 aa).

Residues Asp-60, Arg-68, Arg-133, and 163-164 (KH) contribute to the substrate site. Catalysis depends on His-176, which acts as the Proton donor/acceptor. Residue Asp-247 is the Nucleophile of the active site.

This sequence belongs to the glycosyl hydrolase 3 family. NagZ subfamily.

The protein localises to the cytoplasm. It carries out the reaction Hydrolysis of terminal non-reducing N-acetyl-D-hexosamine residues in N-acetyl-beta-D-hexosaminides.. It functions in the pathway cell wall biogenesis; peptidoglycan recycling. Its function is as follows. Plays a role in peptidoglycan recycling by cleaving the terminal beta-1,4-linked N-acetylglucosamine (GlcNAc) from peptide-linked peptidoglycan fragments, giving rise to free GlcNAc, anhydro-N-acetylmuramic acid and anhydro-N-acetylmuramic acid-linked peptides. This chain is Beta-hexosaminidase, found in Xylella fastidiosa (strain M12).